Reading from the N-terminus, the 166-residue chain is Endoribonuclease YbeY (166 aa).

3 residues coordinate Zn(2+): His-132, His-136, and His-142.

This sequence belongs to the endoribonuclease YbeY family. Zn(2+) serves as cofactor.

It is found in the cytoplasm. Functionally, single strand-specific metallo-endoribonuclease involved in late-stage 70S ribosome quality control and in maturation of the 3' terminus of the 16S rRNA. The sequence is that of Endoribonuclease YbeY from Clostridium botulinum (strain Kyoto / Type A2).